We begin with the raw amino-acid sequence, 908 residues long: Auxin response factor 6 (908 aa).

The segment at 1–21 is disordered; the sequence is MKLSPSAGGVSDQPPSPPEVA. A DNA-binding region (TF-B3) is located at residues 134 to 236; sequence FCKTLTASDT…QLLLGIRRAN (103 aa). The disordered stretch occupies residues 525-556; it reads NEQKPQLQPQQQQQESHQQQPQHQQMQQQKHL. The segment covering 526–556 has biased composition (low complexity); the sequence is EQKPQLQPQQQQQESHQQQPQHQQMQQQKHL. One can recognise a PB1 domain in the interval 777–861; it reads ATFVKVYKSG…SCIKILSPQE (85 aa).

The protein belongs to the ARF family. Homodimers and heterodimers.

The protein localises to the nucleus. Its function is as follows. Auxin response factors (ARFs) are transcriptional factors that bind specifically to the DNA sequence 5'-TGTCTC-3' found in the auxin-responsive promoter elements (AuxREs). This Oryza sativa subsp. indica (Rice) protein is Auxin response factor 6 (ARF6).